Here is a 177-residue protein sequence, read N- to C-terminus: Large ribosomal subunit protein uL6 (177 aa).

A compositionally biased stretch (basic and acidic residues) spans 157–171 (YKGKGVRYSDENVRR). The tract at residues 157–177 (YKGKGVRYSDENVRRKEAKKK) is disordered.

Belongs to the universal ribosomal protein uL6 family. As to quaternary structure, part of the 50S ribosomal subunit.

This protein binds to the 23S rRNA, and is important in its secondary structure. It is located near the subunit interface in the base of the L7/L12 stalk, and near the tRNA binding site of the peptidyltransferase center. In Pseudoalteromonas translucida (strain TAC 125), this protein is Large ribosomal subunit protein uL6.